The sequence spans 520 residues: GMP synthase [glutamine-hydrolyzing] (520 aa).

In terms of domain architecture, Glutamine amidotransferase type-1 spans 12-205 (KIIVLDYGSQ…AISICGARGD (194 aa)). Cysteine 89 functions as the Nucleophile in the catalytic mechanism. Residues histidine 179 and glutamate 181 contribute to the active site. The GMPS ATP-PPase domain occupies 206–395 (WSMDNFIDME…LGMPDEVVWR (190 aa)). 233-239 (SGGVDSS) provides a ligand contact to ATP.

As to quaternary structure, homodimer.

It carries out the reaction XMP + L-glutamine + ATP + H2O = GMP + L-glutamate + AMP + diphosphate + 2 H(+). It functions in the pathway purine metabolism; GMP biosynthesis; GMP from XMP (L-Gln route): step 1/1. In terms of biological role, catalyzes the synthesis of GMP from XMP. In Streptococcus equi subsp. zooepidemicus (strain H70), this protein is GMP synthase [glutamine-hydrolyzing].